We begin with the raw amino-acid sequence, 119 residues long: NADH-quinone oxidoreductase subunit A (119 aa).

A run of 3 helical transmembrane segments spans residues 7–27, 63–83, and 88–108; these read YPVLLFLLVGTGLGIALVSIG, LVAILFIIFDLETAFLFPWGV, and IGWPGFIAMMIFLLEFLLGFA.

The protein belongs to the complex I subunit 3 family. As to quaternary structure, NDH-1 is composed of 14 different subunits. Subunits NuoA, H, J, K, L, M, N constitute the membrane sector of the complex.

The protein resides in the cell inner membrane. The enzyme catalyses a quinone + NADH + 5 H(+)(in) = a quinol + NAD(+) + 4 H(+)(out). NDH-1 shuttles electrons from NADH, via FMN and iron-sulfur (Fe-S) centers, to quinones in the respiratory chain. The immediate electron acceptor for the enzyme in this species is believed to be ubiquinone. Couples the redox reaction to proton translocation (for every two electrons transferred, four hydrogen ions are translocated across the cytoplasmic membrane), and thus conserves the redox energy in a proton gradient. This chain is NADH-quinone oxidoreductase subunit A, found in Burkholderia ambifaria (strain MC40-6).